A 224-amino-acid chain; its full sequence is 7-cyano-7-deazaguanine synthase (224 aa).

8–18 contributes to the ATP binding site; that stretch reads LSGGMDSAAVI. Cys-186, Cys-196, Cys-199, and Cys-202 together coordinate Zn(2+).

It belongs to the QueC family. Zn(2+) is required as a cofactor.

It catalyses the reaction 7-carboxy-7-deazaguanine + NH4(+) + ATP = 7-cyano-7-deazaguanine + ADP + phosphate + H2O + H(+). It functions in the pathway purine metabolism; 7-cyano-7-deazaguanine biosynthesis. In terms of biological role, catalyzes the ATP-dependent conversion of 7-carboxy-7-deazaguanine (CDG) to 7-cyano-7-deazaguanine (preQ(0)). The chain is 7-cyano-7-deazaguanine synthase from Xanthomonas euvesicatoria pv. vesicatoria (strain 85-10) (Xanthomonas campestris pv. vesicatoria).